A 1331-amino-acid polypeptide reads, in one-letter code: Beta-mannanase/endoglucanase A (1331 aa).

The signal sequence occupies residues 1-41 (MRLKTKIRKKWLSVLCTVVFLLNILFIANVTILPKVGAATS). Residues 42-325 (NDGVVKIDTS…YKTNAIGTSS (284 aa)) form a catalytic (mannanase) region. Residue E162 is the Proton donor of the active site. The active-site Nucleophile is the E257. Disordered stretches follow at residues 319 to 363 (NAIG…TPAT), 515 to 566 (PSGA…TPAT), and 717 to 780 (EPSG…PLPT). Low complexity predominate over residues 323 to 335 (TSSTPTPTSTVTP). The region spanning 363-516 (TSGQIKVLYA…GVLVWGQEPS (154 aa)) is the CBM3 1 domain. Pro residues-rich tracts occupy residues 521-541 (APAP…PTVT) and 551-561 (TPTPTPTPTPV). The region spanning 566 to 719 (TGGQIKVLYA…GVLVWGQEPS (154 aa)) is the CBM3 2 domain. Residues 721 to 735 (TTPSPTSTPTVTVTP) are compositionally biased toward low complexity. 2 stretches are compositionally biased toward pro residues: residues 736–756 (TPTP…PTVT) and 766–780 (TPTP…PLPT). The tract at residues 781 to 1331 (ISPSPSVVEI…RNLVFMRALV (551 aa)) is catalytic (endoglucanase).

In the N-terminal section; belongs to the glycosyl hydrolase 5 (cellulase A) family. This sequence in the C-terminal section; belongs to the glycosyl hydrolase 44 (cellulase J) family.

It catalyses the reaction Random hydrolysis of (1-&gt;4)-beta-D-mannosidic linkages in mannans, galactomannans and glucomannans.. The catalysed reaction is Endohydrolysis of (1-&gt;4)-beta-D-glucosidic linkages in cellulose, lichenin and cereal beta-D-glucans.. In terms of biological role, degradation of hemicelluloses, the second most abundant polysaccharides in nature. Contains two catalytic domains with mannanase and endoglucanase activities. The protein is Beta-mannanase/endoglucanase A (manA) of Caldicellulosiruptor saccharolyticus (Caldocellum saccharolyticum).